The primary structure comprises 602 residues: Leucine-rich repeat-containing protein 40 (602 aa).

The disordered stretch occupies residues 1 to 26 (MSRHMRAPRFDPRAGFHAEGKDRGPS). Residues 8–24 (PRFDPRAGFHAEGKDRG) show a composition bias toward basic and acidic residues. The LRR 1 repeat unit spans residues 35–58 (ARSSGQLNLAGRNLGEVPQCVWRI). Ser71 is modified (phosphoserine). LRR repeat units follow at residues 81 to 103 (QTDL…DLRL), 104 to 126 (LPAL…AIRE), 127 to 149 (LDNL…EITS), 150 to 172 (LKNL…GFEH), 174 to 195 (SCLE…DFAL), 196 to 219 (LSSL…ISRM), 221 to 241 (RLKH…DVGS), 242 to 266 (MESL…SCRQ), 268 to 287 (KELH…HLQH), 288 to 310 (LQAI…EMAL), 311 to 334 (LQSL…LGNL), 336 to 356 (LKFL…IIAK), 398 to 421 (IATL…LFDA), 424 to 447 (TTLI…IVEL), 449 to 470 (EMVL…ELCL), 471 to 494 (LQKL…MSSL), 496 to 517 (KLQT…LYRI), 519 to 540 (TLEA…KMKL), 541 to 564 (MENL…LGNC), and 566 to 587 (QLRT…ILMK).

The chain is Leucine-rich repeat-containing protein 40 (Lrrc40) from Mus musculus (Mouse).